The sequence spans 326 residues: Gamma-resorcylate decarboxylase (326 aa).

Positions 8, 10, 164, and 287 each coordinate Mn(2+). The active site involves Asp-287.

It belongs to the metallo-dependent hydrolases superfamily. ACMSD family. Homotetramer. Mn(2+) serves as cofactor.

It catalyses the reaction 2,6-dihydroxybenzoate + H(+) = resorcinol + CO2. The enzyme catalyses 2,3-dihydroxybenzoate + H(+) = catechol + CO2. Its pathway is aromatic compound metabolism. Its activity is regulated as follows. Activity is inhibited by 2-nitroresorcinol (2-NR). In terms of biological role, involved in the gamma-resorcylate (2,6-dihydroxybenzoate) catabolism. Catalyzes the reversible decarboxylation of gamma-resorcylate to resorcinol. Also catalyzes the decarboxylation of 2,3-dihydroxybenzoate to catechol, 2,4,6-trihydroxybenzoate to benzene-1,3,5-triol, and 2,6-dihydroxy-4-methylbenzoate to 5-methylbenzene-1,3-diol. The sequence is that of Gamma-resorcylate decarboxylase from Polaromonas sp. (strain JS666 / ATCC BAA-500).